The chain runs to 550 residues: Solute carrier family 22 member 6 (550 aa).

At 1–9 (MAFNDLLQQ) the chain is on the cytoplasmic side. Residues 10–30 (VGGVGRFQQIQVTLVVLPLLL) traverse the membrane as a helical segment. Over 31 to 135 (MASHNTVQNF…LVCSHRALRQ (105 aa)) the chain is Extracellular. N-linked (GlcNAc...) asparagine glycans are attached at residues Asn56, Asn92, and Asn113. A helical membrane pass occupies residues 136–156 (LAQSLYMVGVLLGAMVFGYLA). Over 157 to 164 (DRLGRRKV) the chain is Cytoplasmic. The helical transmembrane segment at 165 to 187 (LILNYLQTAVSGTCAAFAPNFPI) threads the bilayer. The Extracellular segment spans residues 188-190 (YCA). Residues 191–213 (FRLLSGMSLAGIALNCMTLNVEW) form a helical membrane-spanning segment. Topologically, residues 214–224 (MPIHTRACVGT) are cytoplasmic. A helical transmembrane segment spans residues 225–245 (LIGYVYSLGQFLLAGVAYAVP). The Extracellular portion of the chain corresponds to 246–248 (HWR). The chain crosses the membrane as a helical span at residues 249-269 (HLQLLISVPFFAFFIYSWFFI). Residues 270–337 (ESARWHSSSG…ELLRCPTLRH (68 aa)) lie on the Cytoplasmic side of the membrane. A helical membrane pass occupies residues 338–358 (LFLCLSMLWFATSFAYYGLVM). Residues 359–368 (DLQGFGVSIY) are Extracellular-facing. Residues 369 to 389 (LIQVIFGAVDLPAKLVGFLVI) form a helical membrane-spanning segment. The Cytoplasmic segment spans residues 390-395 (NSLGRR). The chain crosses the membrane as a helical span at residues 396–416 (PAQMAALLLAGICILLNGVVP). Over 417–425 (QDQSVIRTS) the chain is Extracellular. Residues 426 to 446 (LAVLGKGCLAASFNCIFLYTG) form a helical membrane-spanning segment. Residues 447 to 456 (ELYPTMIRQT) lie on the Cytoplasmic side of the membrane. The chain crosses the membrane as a helical span at residues 457 to 477 (GLGMGSTMARVGSIVSPLVSM). At 478-484 (TTELYPS) the chain is on the extracellular side. The chain crosses the membrane as a helical span at residues 485-505 (VPLFIYGAVPVAASAVTVLLP). The Cytoplasmic segment spans residues 506–550 (ETLGQPLPDTVQDLESRKGKQTPQQQEHQKYMVPLQASAQEKNGL). Positions 513-550 (PDTVQDLESRKGKQTPQQQEHQKYMVPLQASAQEKNGL) are disordered.

The protein belongs to the major facilitator (TC 2.A.1) superfamily. Organic cation transporter (TC 2.A.1.19) family. Glycosylated. Glycosylation is necessary for proper targeting of the transporter to the plasma membrane. In terms of tissue distribution, expressed in kidney; in the basolateral membrane of the proximal tubule.

It localises to the basolateral cell membrane. The protein localises to the basal cell membrane. The catalysed reaction is (6R)-L-erythro-5,6,7,8-tetrahydrobiopterin(out) + a dicarboxylate(in) = (6R)-L-erythro-5,6,7,8-tetrahydrobiopterin(in) + a dicarboxylate(out). It catalyses the reaction L-erythro-7,8-dihydrobiopterin(out) + a dicarboxylate(in) = L-erythro-7,8-dihydrobiopterin(in) + a dicarboxylate(out). It carries out the reaction L-sepiapterin(out) + a dicarboxylate(in) = L-sepiapterin(in) + a dicarboxylate(out). The enzyme catalyses prostaglandin F2alpha(out) + a dicarboxylate(in) = prostaglandin F2alpha(in) + a dicarboxylate(out). The catalysed reaction is prostaglandin E2(out) + a dicarboxylate(in) = prostaglandin E2(in) + a dicarboxylate(out). It catalyses the reaction 3',5'-cyclic AMP(out) + a dicarboxylate(in) = 3',5'-cyclic AMP(in) + a dicarboxylate(out). It carries out the reaction 3',5'-cyclic GMP(out) + a dicarboxylate(in) = 3',5'-cyclic GMP(in) + a dicarboxylate(out). The enzyme catalyses urate(out) + a dicarboxylate(in) = urate(in) + a dicarboxylate(out). The catalysed reaction is kynurenate(out) + glutarate(in) = kynurenate(in) + glutarate(out). It catalyses the reaction (indol-3-yl)acetate(out) + a dicarboxylate(in) = (indol-3-yl)acetate(in) + a dicarboxylate(out). It carries out the reaction indoxyl sulfate(out) + a dicarboxylate(in) = indoxyl sulfate(in) + a dicarboxylate(out). The enzyme catalyses N-benzoylglycine(out) + a dicarboxylate(in) = N-benzoylglycine(in) + a dicarboxylate(out). The catalysed reaction is 3-carboxy-4-methyl-5-propyl-2-furanpropanoate(out) + a dicarboxylate(in) = 3-carboxy-4-methyl-5-propyl-2-furanpropanoate(in) + a dicarboxylate(out). Functionally, secondary active transporter that functions as a Na(+)-independent organic anion (OA)/dicarboxylate antiporter where the uptake of one molecule of OA into the cell is coupled with an efflux of one molecule of intracellular dicarboxylate such as 2-oxoglutarate or glutarate. Mediates the uptake of OA across the basolateral side of proximal tubule epithelial cells, thereby contributing to the renal elimination of endogenous OA from the systemic circulation into the urine. Functions as a biopterin transporters involved in the uptake and the secretion of coenzymes tetrahydrobiopterin (BH4), dihydrobiopterin (BH2) and sepiapterin to urine, thereby determining baseline levels of blood biopterins. Transports prostaglandin E2 (PGE2) and prostaglandin F2-alpha (PGF2-alpha) and may contribute to their renal excretion. Also mediates the uptake of cyclic nucleotides such as cAMP and cGMP. Involved in the transport of neuroactive tryptophan metabolites kynurenate (KYNA) and xanthurenate (XA) and may contribute to their secretion from the brain. May transport glutamate. Also involved in the disposition of uremic toxins and potentially toxic xenobiotics by the renal organic anion secretory pathway, helping reduce their undesired toxicological effects on the body. Uremic toxins include the indoxyl sulfate (IS), hippurate/N-benzoylglycine (HA), indole acetate (IA), 3-carboxy-4- methyl-5-propyl-2-furanpropionate (CMPF) and urate. Xenobiotics include the mycotoxin ochratoxin (OTA). May also contribute to the transport of organic compounds in testes across the blood-testis-barrier. The chain is Solute carrier family 22 member 6 from Macaca fascicularis (Crab-eating macaque).